The sequence spans 171 residues: Tetratricopeptide repeat protein 9C (171 aa).

3 TPR repeats span residues 8–41, 72–107, and 108–141; these read AQVYKEEGNQRYREGKYRDAVSRYHRALLQLRGL, THCYNNLAACLLQMEPVNYERVREYSQKVLERQPDN, and AKALYRAGVAFFHLQDYDRARHHLLAAVNRQPKD.

This sequence belongs to the TTC9 family.

In Mus musculus (Mouse), this protein is Tetratricopeptide repeat protein 9C (Ttc9c).